A 238-amino-acid chain; its full sequence is MSALRLRKVDALLAQATRELGAGQSLGFSAAGQDAELTLLPLLADAGEPAGAVWLSTAIGPLLLSDAEALLSLLGDIPLTLGGEQQAWYWQLFNQRLSPTVARLLAPVEPLHNKPQAPTLGCRVQIRRGGEQLHAHMHATPDTLLRLLRSASWQARTRTVDESWSVASPLIIGEMSLTREQIASLRPGDVVLPAHCQFDSAGQGFLSLAGRQWAAQTDQHAQRLFLRLSHEEHRHHEY.

The segment at 66-238 (DAEALLSLLG…SHEEHRHHEY (173 aa)) is hrcQa-C.

As to quaternary structure, interacts with hrcQb.

The protein localises to the cell inner membrane. Component of the type III secretion system, which is required for effector protein delivery, parasitism, and pathogenicity. Probably participates in the formation of a C-ring-like assembly along with hrcQb. This chain is Type III secretion protein hrcQa (hrcQa), found in Pseudomonas savastanoi pv. phaseolicola (Pseudomonas syringae pv. phaseolicola).